The chain runs to 216 residues: Uracil phosphoribosyltransferase (216 aa).

5-phospho-alpha-D-ribose 1-diphosphate is bound by residues Arg85, Arg110, and 135–143; that span reads DPMVATGYS. Residues Ile200 and 205–207 each bind uracil; that span reads GDA. Position 206 (Asp206) interacts with 5-phospho-alpha-D-ribose 1-diphosphate.

The protein belongs to the UPRTase family. Requires Mg(2+) as cofactor.

It catalyses the reaction UMP + diphosphate = 5-phospho-alpha-D-ribose 1-diphosphate + uracil. It functions in the pathway pyrimidine metabolism; UMP biosynthesis via salvage pathway; UMP from uracil: step 1/1. Allosterically activated by GTP. In terms of biological role, catalyzes the conversion of uracil and 5-phospho-alpha-D-ribose 1-diphosphate (PRPP) to UMP and diphosphate. The protein is Uracil phosphoribosyltransferase of Burkholderia cenocepacia (strain ATCC BAA-245 / DSM 16553 / LMG 16656 / NCTC 13227 / J2315 / CF5610) (Burkholderia cepacia (strain J2315)).